The primary structure comprises 691 residues: MPFGIDNTDFTVLAGLVLAVLLYVKRNSIKELLMSDDGDITAVSSGNRDIAQVVTENNKNYLVLYASQTGTAEDYAKKFSKELVAKFNLNVMCADVENYDFESLNDVPVIVSIFISTYGEGDFPDGAVNFEDFICNAEAGALSNLRYNMFGLGNSTYEFFNGAAKKAEKHLSAAGAIRLGKLGEADDGAGTTDEDYMAWKDSILEVLKDELHLDEQEAKFTSQFQYTVLNEITDSMSLGEPSAHYLPSHQLNRNADGIQLGPFDLSQPYIAPIVKSRELFSSNDRNCIHSEFDLSGSNIKYSTGDHLAVWPSNPLEKVEQFLSIFNLDPETIFDLKPLDPTVKVPFPTPTTIGAAIKHYLEITGPVSRQLFSSLIQFAPNADVKEKLTLLSKDKDQFAVEITSKYFNIADALKYLSDGAKWDTVPMQFLVESVPQMTPRYYSISSSSLSEKQTVHVTSIVENFPNPELPDAPPVVGVTTNLLRNIQLAQNNVNIAETNLPVHYDLNGPRKLFANYKLPVHVRRSNFRLPSNPSTPVIMIGPGTGVAPFRGFIRERVAFLESQKKGGNNVSLGKHILFYGSRNTDDFLYQDEWPEYAKKLDGSFEMVVAHSRLPNTKKVYVQDKLKDYEDQVFEMINNGAFIYVCGDAKGMAKGVSTALVGILSRGKSITTDEATELIKMLKTSGRYQEDVW.

Residues 2-7 (PFGIDN) lie on the Lumenal side of the membrane. The chain crosses the membrane as a helical span at residues 8–24 (TDFTVLAGLVLAVLLYV). Residues 25–691 (KRNSIKELLM…TSGRYQEDVW (667 aa)) lie on the Cytoplasmic side of the membrane. The region spanning 61–204 (YLVLYASQTG…DYMAWKDSIL (144 aa)) is the Flavodoxin-like domain. FMN contacts are provided by residues 67 to 72 (SQTGTA), lysine 78, 116 to 119 (STYG), 152 to 161 (LGNSTYEFFN), and aspartate 187. Residues 266-529 (SQPYIAPIVK…HVRRSNFRLP (264 aa)) form the FAD-binding FR-type domain. Position 285 (arginine 285) interacts with NADP(+). FAD is bound by residues 439 to 442 (RYYS), 457 to 459 (TSI), and 476 to 479 (GVTT). Residues threonine 543, 610 to 611 (SR), 617 to 621 (KVYVQ), and aspartate 646 contribute to the NADP(+) site. A Glycyl lysine isopeptide (Lys-Gly) (interchain with G-Cter in ubiquitin) cross-link involves residue lysine 666. Residue tryptophan 691 participates in FAD binding.

This sequence belongs to the NADPH--cytochrome P450 reductase family. It in the N-terminal section; belongs to the flavodoxin family. The protein in the C-terminal section; belongs to the flavoprotein pyridine nucleotide cytochrome reductase family. In terms of assembly, interacts with PCL1. Requires FAD as cofactor. FMN is required as a cofactor. Phosphorylated by the cyclin-CDK PCL1-PHO85.

The protein resides in the endoplasmic reticulum membrane. The protein localises to the mitochondrion outer membrane. It is found in the cell membrane. It catalyses the reaction 2 oxidized [cytochrome P450] + NADPH = 2 reduced [cytochrome P450] + NADP(+) + H(+). In terms of biological role, this enzyme is required for electron transfer from NADP to cytochrome P450 in microsomes. It can also provide electron transfer to heme oxygenase and cytochrome B5. Involved in ergosterol biosynthesis. Has NADPH-dependent ferrireductase activity on the plasma membrane. This is NADPH--cytochrome P450 reductase from Saccharomyces cerevisiae (strain ATCC 204508 / S288c) (Baker's yeast).